Reading from the N-terminus, the 704-residue chain is Capsule polysaccharide modification protein LipA (704 aa).

It is found in the cell inner membrane. In terms of biological role, involved in the phospholipid modification of the capsular polysaccharide, a strong requirement for its translocation to the cell surface. The polypeptide is Capsule polysaccharide modification protein LipA (lipA) (Neisseria meningitidis serogroup A / serotype 4A (strain DSM 15465 / Z2491)).